The chain runs to 125 residues: Large ribosomal subunit protein bL12 (125 aa).

This sequence belongs to the bacterial ribosomal protein bL12 family. As to quaternary structure, homodimer. Part of the ribosomal stalk of the 50S ribosomal subunit. Forms a multimeric L10(L12)X complex, where L10 forms an elongated spine to which 2 to 4 L12 dimers bind in a sequential fashion. Binds GTP-bound translation factors.

Functionally, forms part of the ribosomal stalk which helps the ribosome interact with GTP-bound translation factors. Is thus essential for accurate translation. The sequence is that of Large ribosomal subunit protein bL12 from Chlorobium limicola (strain DSM 245 / NBRC 103803 / 6330).